Consider the following 410-residue polypeptide: Argininosuccinate synthase (410 aa).

10–18 (AYSGGLDTS) is a binding site for ATP. L-citrulline is bound by residues Tyr-88 and Ser-93. Position 118 (Gly-118) interacts with ATP. The L-aspartate site is built by Thr-120, Asn-124, and Asp-125. Asn-124 serves as a coordination point for L-citrulline. L-citrulline-binding residues include Arg-128, Ser-177, Ser-186, Glu-262, and Tyr-274.

Belongs to the argininosuccinate synthase family. Type 1 subfamily. In terms of assembly, homotetramer.

The protein resides in the cytoplasm. The enzyme catalyses L-citrulline + L-aspartate + ATP = 2-(N(omega)-L-arginino)succinate + AMP + diphosphate + H(+). The protein operates within amino-acid biosynthesis; L-arginine biosynthesis; L-arginine from L-ornithine and carbamoyl phosphate: step 2/3. This chain is Argininosuccinate synthase, found in Caldanaerobacter subterraneus subsp. tengcongensis (strain DSM 15242 / JCM 11007 / NBRC 100824 / MB4) (Thermoanaerobacter tengcongensis).